Here is a 423-residue protein sequence, read N- to C-terminus: Lysosomal acid phosphatase (423 aa).

Residues 1–30 form the signal peptide; that stretch reads MAGRRFGWSRAALLQLILGVNLMVMPRTQA. Topologically, residues 31–380 are lumenal; it reads RTLRFVTLLY…QLAGGPADTE (350 aa). The active-site Nucleophile is His42. N-linked (GlcNAc...) asparagine glycans are attached at residues Asn92, Asn133, Asn167, Asn177, Asn191, and Asn267. Cystine bridges form between Cys159-Cys370, Cys212-Cys310, and Cys345-Cys349. Catalysis depends on Asp287, which acts as the Proton donor. N-linked (GlcNAc...) asparagine glycans are attached at residues Asn322 and Asn331. The chain crosses the membrane as a helical span at residues 381–401; that stretch reads VIVALAVCGSILFLLIVLLLT. Residues 402 to 423 are Cytoplasmic-facing; sequence VLFRVQAQPPGYRHVPDGEDHA.

The protein belongs to the histidine acid phosphatase family. The membrane-bound form is converted to the soluble form by sequential proteolytic processing. First, the C-terminal cytoplasmic tail is removed. Cleavage by a lysosomal protease releases the soluble form in the lysosome lumen.

It is found in the lysosome membrane. Its subcellular location is the lysosome lumen. The catalysed reaction is a phosphate monoester + H2O = an alcohol + phosphate. In Bos taurus (Bovine), this protein is Lysosomal acid phosphatase (ACP2).